The chain runs to 129 residues: MNIGEASERSGLPSKTIRYYEDIGLIRPERGGNGYRDYAATDVHKLRFLQRSRGLGFSVEECRQLLALYEDKDRASADVRDIAQTKLTEIDRKIRELTELRRTLEHLVHACHGNDRPDCPILEELSDGA.

An HTH merR-type domain is found at 1–68 (MNIGEASERS…VEECRQLLAL (68 aa)). Residues 4–23 (GEASERSGLPSKTIRYYEDI) constitute a DNA-binding region (H-T-H motif).

As to quaternary structure, homodimer.

It localises to the cytoplasm. Its function is as follows. Regulates the transcription of actP. It detects cytoplasmic copper stress and activates transcription in response to increasing copper concentrations. In the absence of copper, it negatively regulates the transcription of actP. The chain is HTH-type transcriptional regulator HmrR (hmrR) from Rhizobium leguminosarum bv. viciae.